We begin with the raw amino-acid sequence, 133 residues long: Holo-[acyl-carrier-protein] synthase (133 aa).

2 residues coordinate Mg(2+): D8 and E57.

It belongs to the P-Pant transferase superfamily. AcpS family. The cofactor is Mg(2+).

Its subcellular location is the cytoplasm. The enzyme catalyses apo-[ACP] + CoA = holo-[ACP] + adenosine 3',5'-bisphosphate + H(+). Its function is as follows. Transfers the 4'-phosphopantetheine moiety from coenzyme A to a Ser of acyl-carrier-protein. The chain is Holo-[acyl-carrier-protein] synthase from Bartonella quintana (strain Toulouse) (Rochalimaea quintana).